The chain runs to 352 residues: tRNA pseudouridine synthase D (352 aa).

The active-site Nucleophile is aspartate 81. In terms of domain architecture, TRUD spans 157–303 (GVPNYFGLQR…MLHERRILRL (147 aa)).

The protein belongs to the pseudouridine synthase TruD family.

The catalysed reaction is uridine(13) in tRNA = pseudouridine(13) in tRNA. Responsible for synthesis of pseudouridine from uracil-13 in transfer RNAs. The sequence is that of tRNA pseudouridine synthase D from Azotobacter vinelandii (strain DJ / ATCC BAA-1303).